A 443-amino-acid polypeptide reads, in one-letter code: Histidinol dehydrogenase (443 aa).

NAD(+)-binding residues include Tyr-133, Gln-191, and Asn-214. Substrate-binding residues include Ser-240, Gln-262, and His-265. Zn(2+) is bound by residues Gln-262 and His-265. Active-site proton acceptor residues include Glu-329 and His-330. Substrate is bound by residues His-330, Asp-363, Glu-417, and His-422. A Zn(2+)-binding site is contributed by Asp-363. His-422 is a binding site for Zn(2+).

Belongs to the histidinol dehydrogenase family. In terms of assembly, homodimer. It depends on Zn(2+) as a cofactor.

It catalyses the reaction L-histidinol + 2 NAD(+) + H2O = L-histidine + 2 NADH + 3 H(+). Its pathway is amino-acid biosynthesis; L-histidine biosynthesis; L-histidine from 5-phospho-alpha-D-ribose 1-diphosphate: step 9/9. Catalyzes the sequential NAD-dependent oxidations of L-histidinol to L-histidinaldehyde and then to L-histidine. This Blochmanniella pennsylvanica (strain BPEN) protein is Histidinol dehydrogenase.